Here is a 207-residue protein sequence, read N- to C-terminus: Large ribosomal subunit protein bL25 (207 aa).

The protein belongs to the bacterial ribosomal protein bL25 family. CTC subfamily. Part of the 50S ribosomal subunit; part of the 5S rRNA/L5/L18/L25 subcomplex. Contacts the 5S rRNA. Binds to the 5S rRNA independently of L5 and L18.

In terms of biological role, this is one of the proteins that binds to the 5S RNA in the ribosome where it forms part of the central protuberance. The chain is Large ribosomal subunit protein bL25 from Azorhizobium caulinodans (strain ATCC 43989 / DSM 5975 / JCM 20966 / LMG 6465 / NBRC 14845 / NCIMB 13405 / ORS 571).